The sequence spans 475 residues: Cytochrome c-552 (475 aa).

The first 29 residues, M1–A29, serve as a signal peptide directing secretion. The tract at residues P38–T57 is disordered. H92 provides a ligand contact to heme c. Heme-binding residues include C120, C123, and K124. 6 residues coordinate heme c: C158, C161, H162, C207, C210, and H211. Residues E213, Y214, K259, and Q261 each coordinate Ca(2+). Y214 provides a ligand contact to substrate. H262 contacts substrate. The heme c site is built by H273, C280, C283, H284, H299, C312, C315, H316, and H391.

This sequence belongs to the cytochrome c-552 family. It depends on Ca(2+) as a cofactor. Heme c serves as cofactor.

Its subcellular location is the periplasm. The enzyme catalyses 6 Fe(III)-[cytochrome c] + NH4(+) + 2 H2O = 6 Fe(II)-[cytochrome c] + nitrite + 8 H(+). It functions in the pathway nitrogen metabolism; nitrate reduction (assimilation). In terms of biological role, catalyzes the reduction of nitrite to ammonia, consuming six electrons in the process. The protein is Cytochrome c-552 of Vibrio parahaemolyticus serotype O3:K6 (strain RIMD 2210633).